Consider the following 214-residue polypeptide: Imidazole glycerol phosphate synthase subunit HisH (214 aa).

The Glutamine amidotransferase type-1 domain occupies 3 to 211 (IIAVIDYDMG…VEQVQATLAT (209 aa)). C81 (nucleophile) is an active-site residue. Catalysis depends on residues H186 and E188.

Heterodimer of HisH and HisF.

It localises to the cytoplasm. The catalysed reaction is 5-[(5-phospho-1-deoxy-D-ribulos-1-ylimino)methylamino]-1-(5-phospho-beta-D-ribosyl)imidazole-4-carboxamide + L-glutamine = D-erythro-1-(imidazol-4-yl)glycerol 3-phosphate + 5-amino-1-(5-phospho-beta-D-ribosyl)imidazole-4-carboxamide + L-glutamate + H(+). It carries out the reaction L-glutamine + H2O = L-glutamate + NH4(+). It participates in amino-acid biosynthesis; L-histidine biosynthesis; L-histidine from 5-phospho-alpha-D-ribose 1-diphosphate: step 5/9. In terms of biological role, IGPS catalyzes the conversion of PRFAR and glutamine to IGP, AICAR and glutamate. The HisH subunit catalyzes the hydrolysis of glutamine to glutamate and ammonia as part of the synthesis of IGP and AICAR. The resulting ammonia molecule is channeled to the active site of HisF. This is Imidazole glycerol phosphate synthase subunit HisH from Acaryochloris marina (strain MBIC 11017).